A 116-amino-acid polypeptide reads, in one-letter code: MLFKQAILVATTLTDLAVATPVVDVRRRTDPASSCSTGTLNCCNSSGTVEDKTIAGLLGILNIVVSDITALVGITCTPITVVGAGGTSCTSQTLCCDNNNFSGLITLGCIPININL.

A signal peptide spans 1–19 (MLFKQAILVATTLTDLAVA). 4 disulfide bridges follow: Cys-35–Cys-95, Cys-42–Cys-89, Cys-43–Cys-76, and Cys-96–Cys-109. Residues Asn-44 and Asn-100 are each glycosylated (N-linked (GlcNAc...) asparagine).

Belongs to the fungal hydrophobin family. As to quaternary structure, self-assembles to form functional amyloid fibrils called rodlets. Self-assembly into fibrillar rodlets occurs spontaneously at hydrophobic:hydrophilic interfaces and the rodlets further associate laterally to form amphipathic monolayers.

The protein localises to the secreted. The protein resides in the cell wall. Aerial growth, conidiation, and dispersal of filamentous fungi in the environment rely upon a capability of their secreting small amphipathic proteins called hydrophobins (HPBs) with low sequence identity. Class I can self-assemble into an outermost layer of rodlet bundles on aerial cell surfaces, conferring cellular hydrophobicity that supports fungal growth, development and dispersal; whereas Class II form highly ordered films at water-air interfaces through intermolecular interactions but contribute nothing to the rodlet structure. This chain is Class I hydrophobin 1, found in Pleurotus ostreatus (Oyster mushroom).